The primary structure comprises 72 residues: MAKEDVIEVEGTVVEPLPNTMFKVELDNGHKVLAHISGKMRMNFVRILPGDRVMVELSPYDLNRGRIIYRFK.

The S1-like domain maps to 1 to 72 (MAKEDVIEVE…NRGRIIYRFK (72 aa)).

The protein belongs to the IF-1 family. Component of the 30S ribosomal translation pre-initiation complex which assembles on the 30S ribosome in the order IF-2 and IF-3, IF-1 and N-formylmethionyl-tRNA(fMet); mRNA recruitment can occur at any time during PIC assembly.

Its subcellular location is the cytoplasm. In terms of biological role, one of the essential components for the initiation of protein synthesis. Stabilizes the binding of IF-2 and IF-3 on the 30S subunit to which N-formylmethionyl-tRNA(fMet) subsequently binds. Helps modulate mRNA selection, yielding the 30S pre-initiation complex (PIC). Upon addition of the 50S ribosomal subunit IF-1, IF-2 and IF-3 are released leaving the mature 70S translation initiation complex. This chain is Translation initiation factor IF-1, found in Syntrophomonas wolfei subsp. wolfei (strain DSM 2245B / Goettingen).